Consider the following 221-residue polypeptide: 7-cyano-7-deazaguanine synthase (221 aa).

9–19 (YSGGMDSFTVL) contacts ATP. Residues cysteine 186, cysteine 194, cysteine 197, and cysteine 200 each coordinate Zn(2+).

This sequence belongs to the QueC family. Requires Zn(2+) as cofactor.

The enzyme catalyses 7-carboxy-7-deazaguanine + NH4(+) + ATP = 7-cyano-7-deazaguanine + ADP + phosphate + H2O + H(+). It functions in the pathway purine metabolism; 7-cyano-7-deazaguanine biosynthesis. Catalyzes the ATP-dependent conversion of 7-carboxy-7-deazaguanine (CDG) to 7-cyano-7-deazaguanine (preQ(0)). This is 7-cyano-7-deazaguanine synthase from Psychromonas ingrahamii (strain DSM 17664 / CCUG 51855 / 37).